The chain runs to 250 residues: 2-(R)-hydroxypropyl-CoM dehydrogenase (250 aa).

Residues 12–14 (SGN), Asp-33, 60–61 (DV), and Asn-87 each bind NAD(+). Arg-152 serves as a coordination point for 2-oxopropyl-coenzyme M. The active-site Proton acceptor is the Tyr-155. 188-192 (IETPM) provides a ligand contact to NAD(+). Position 195–196 (195–196 (WR)) interacts with 2-oxopropyl-coenzyme M.

It belongs to the short-chain dehydrogenases/reductases (SDR) family. As to quaternary structure, homodimer in solution. Homotetramer. Component III of the aliphatic epoxide carboxylation complex together with components I, II and IV.

The catalysed reaction is (R)-2-hydroxypropyl-coenzyme M + NAD(+) = 2-oxopropyl-coenzyme M + NADH + H(+). The protein operates within alkene metabolism; propylene degradation. With respect to regulation, inhibited by the arginine-specific modifiers 2,3-butanedione and phenylglyoxal. 2-(2-methyl-2-hydroxypropylthio)ethanesulfonate (M-HPC), an achiral analog of both R-HPC and S-HPC, and (2S)-2-hydroxypropyl-coenzyme M (S-HPC) are competitive inhibitors. Inhibited (at 70%) by the coenzyme M analog 2-bromoethanesulfonate (BES). Functionally, involved in aliphatic epoxide carboxylation. Catalyzes the reversible oxidation of (R)-2-hydroxypropyl-coenzyme M (R-HPC) to 2-oxopropyl-coenzyme M (2-KPC). The enzyme is highly specific for the R enantiomers. In vitro can also use achiral 2-propanol and short-chain (R)- and (S)-2-alkanols. This Xanthobacter autotrophicus (strain ATCC BAA-1158 / Py2) protein is 2-(R)-hydroxypropyl-CoM dehydrogenase.